Consider the following 359-residue polypeptide: tRNA-specific 2-thiouridylase MnmA (359 aa).

ATP contacts are provided by residues 9–16 (GISGGVDS) and Met-35. The segment at 95-97 (NPD) is interaction with target base in tRNA. The Nucleophile role is filled by Cys-100. An intrachain disulfide couples Cys-100 to Cys-197. An ATP-binding site is contributed by Gly-124. The tract at residues 147-149 (KDQ) is interaction with tRNA. The Cysteine persulfide intermediate role is filled by Cys-197. The interval 309–310 (RY) is interaction with tRNA.

The protein belongs to the MnmA/TRMU family.

It is found in the cytoplasm. The enzyme catalyses S-sulfanyl-L-cysteinyl-[protein] + uridine(34) in tRNA + AH2 + ATP = 2-thiouridine(34) in tRNA + L-cysteinyl-[protein] + A + AMP + diphosphate + H(+). Functionally, catalyzes the 2-thiolation of uridine at the wobble position (U34) of tRNA, leading to the formation of s(2)U34. The sequence is that of tRNA-specific 2-thiouridylase MnmA from Francisella tularensis subsp. tularensis (strain WY96-3418).